Consider the following 364-residue polypeptide: Dihydroorotate dehydrogenase (quinone) (364 aa).

Residues 78 to 82 and Thr102 each bind FMN; that span reads AGFDK. Residue Lys82 participates in substrate binding. 127-131 lines the substrate pocket; sequence NRMGF. Residues Asn156 and Asn189 each contribute to the FMN site. Asn189 serves as a coordination point for substrate. The active-site Nucleophile is the Ser192. Substrate is bound at residue Asn194. FMN-binding residues include Lys227 and Thr255. 256–257 is a substrate binding site; that stretch reads NT. Residues Gly285, Gly314, and 335–336 contribute to the FMN site; that span reads YT.

It belongs to the dihydroorotate dehydrogenase family. Type 2 subfamily. As to quaternary structure, monomer. It depends on FMN as a cofactor.

Its subcellular location is the cell membrane. The catalysed reaction is (S)-dihydroorotate + a quinone = orotate + a quinol. Its pathway is pyrimidine metabolism; UMP biosynthesis via de novo pathway; orotate from (S)-dihydroorotate (quinone route): step 1/1. Functionally, catalyzes the conversion of dihydroorotate to orotate with quinone as electron acceptor. The sequence is that of Dihydroorotate dehydrogenase (quinone) from Thermosynechococcus vestitus (strain NIES-2133 / IAM M-273 / BP-1).